A 299-amino-acid polypeptide reads, in one-letter code: ATP phosphoribosyltransferase (299 aa).

Belongs to the ATP phosphoribosyltransferase family. Long subfamily. As to quaternary structure, equilibrium between an active dimeric form, an inactive hexameric form and higher aggregates. Interconversion between the various forms is largely reversible and is influenced by the natural substrates and inhibitors of the enzyme. Requires Mg(2+) as cofactor.

It localises to the cytoplasm. The catalysed reaction is 1-(5-phospho-beta-D-ribosyl)-ATP + diphosphate = 5-phospho-alpha-D-ribose 1-diphosphate + ATP. The protein operates within amino-acid biosynthesis; L-histidine biosynthesis; L-histidine from 5-phospho-alpha-D-ribose 1-diphosphate: step 1/9. With respect to regulation, feedback inhibited by histidine. Functionally, catalyzes the condensation of ATP and 5-phosphoribose 1-diphosphate to form N'-(5'-phosphoribosyl)-ATP (PR-ATP). Has a crucial role in the pathway because the rate of histidine biosynthesis seems to be controlled primarily by regulation of HisG enzymatic activity. This chain is ATP phosphoribosyltransferase, found in Sodalis glossinidius (strain morsitans).